The chain runs to 47 residues: MKKVPLNCEVCGNRNYNVPKQSNLASRLELKKYCPRCNAHTLHKESK.

The protein belongs to the bacterial ribosomal protein bL33 family.

This is Large ribosomal subunit protein bL33 from Staphylococcus saprophyticus.